The chain runs to 91 residues: Methanol dehydrogenase [cytochrome c] subunit 2 (91 aa).

Residues 1-22 (MKHVLTLLALASVFAVSNQALA) form the signal peptide. Residues cysteine 28 and cysteine 34 are joined by a disulfide bond.

It belongs to the methanol dehydrogenase subunit 2 family. As to quaternary structure, heterotetramer composed of 2 alpha and 2 beta subunits.

The protein localises to the cell inner membrane. The catalysed reaction is 2 Fe(III)-[cytochrome cL] + a primary alcohol = 2 Fe(II)-[cytochrome cL] + an aldehyde + 2 H(+). Its function is as follows. Catalyzes the oxidation of primary alcohols including methanol. The sequence is that of Methanol dehydrogenase [cytochrome c] subunit 2 (moxI) from Methylophilus methylotrophus (Bacterium W3A1).